Consider the following 190-residue polypeptide: Shikimate kinase (190 aa).

Gly14–Thr19 lines the ATP pocket. Ser18 contacts Mg(2+). Positions 36, 60, and 82 each coordinate substrate. Arg120 provides a ligand contact to ATP. Position 147 (Arg147) interacts with substrate.

The protein belongs to the shikimate kinase family. In terms of assembly, monomer. Mg(2+) serves as cofactor.

The protein localises to the cytoplasm. It carries out the reaction shikimate + ATP = 3-phosphoshikimate + ADP + H(+). Its pathway is metabolic intermediate biosynthesis; chorismate biosynthesis; chorismate from D-erythrose 4-phosphate and phosphoenolpyruvate: step 5/7. Its function is as follows. Catalyzes the specific phosphorylation of the 3-hydroxyl group of shikimic acid using ATP as a cosubstrate. In Chlorobium phaeobacteroides (strain DSM 266 / SMG 266 / 2430), this protein is Shikimate kinase.